Reading from the N-terminus, the 228-residue chain is MANHSQLGFQDASSPIMEELVEFHDHALIVALAICSLVLYLLAHMLMEKLSSNAVDAQEVELIWTILPAIVLVLLALPSLQILYMMDEIDEPDLTLKAIGHQWYWSYEYTDFKDLSFDSYMIPTTDLPNGHFRLLEVDHRVVVPMESPIRVIITAGDVLHSWAVPTLGVKTDAIPGRLNQTSFIATRPGVFYGQCSEICGANHSYMPIVVESTPLPYFETWSSLLSAS.

At 1–14 (MANHSQLGFQDASS) the chain is on the mitochondrial intermembrane side. A helical membrane pass occupies residues 15–45 (PIMEELVEFHDHALIVALAICSLVLYLLAHM). Over 46–58 (LMEKLSSNAVDAQ) the chain is Mitochondrial matrix. A helical membrane pass occupies residues 59 to 86 (EVELIWTILPAIVLVLLALPSLQILYMM). At 87 to 228 (DEIDEPDLTL…ETWSSLLSAS (142 aa)) the chain is on the mitochondrial intermembrane side. The Cu cation site is built by H160, C195, E197, C199, H203, and M206. E197 provides a ligand contact to Mg(2+).

The protein belongs to the cytochrome c oxidase subunit 2 family. Component of the cytochrome c oxidase (complex IV, CIV), a multisubunit enzyme composed of 14 subunits. The complex is composed of a catalytic core of 3 subunits MT-CO1, MT-CO2 and MT-CO3, encoded in the mitochondrial DNA, and 11 supernumerary subunits COX4I, COX5A, COX5B, COX6A, COX6B, COX6C, COX7A, COX7B, COX7C, COX8 and NDUFA4, which are encoded in the nuclear genome. The complex exists as a monomer or a dimer and forms supercomplexes (SCs) in the inner mitochondrial membrane with NADH-ubiquinone oxidoreductase (complex I, CI) and ubiquinol-cytochrome c oxidoreductase (cytochrome b-c1 complex, complex III, CIII), resulting in different assemblies (supercomplex SCI(1)III(2)IV(1) and megacomplex MCI(2)III(2)IV(2)). Found in a complex with TMEM177, COA6, COX18, COX20, SCO1 and SCO2. Interacts with TMEM177 in a COX20-dependent manner. Interacts with COX20. Interacts with COX16. The cofactor is Cu cation.

Its subcellular location is the mitochondrion inner membrane. It catalyses the reaction 4 Fe(II)-[cytochrome c] + O2 + 8 H(+)(in) = 4 Fe(III)-[cytochrome c] + 2 H2O + 4 H(+)(out). Its function is as follows. Component of the cytochrome c oxidase, the last enzyme in the mitochondrial electron transport chain which drives oxidative phosphorylation. The respiratory chain contains 3 multisubunit complexes succinate dehydrogenase (complex II, CII), ubiquinol-cytochrome c oxidoreductase (cytochrome b-c1 complex, complex III, CIII) and cytochrome c oxidase (complex IV, CIV), that cooperate to transfer electrons derived from NADH and succinate to molecular oxygen, creating an electrochemical gradient over the inner membrane that drives transmembrane transport and the ATP synthase. Cytochrome c oxidase is the component of the respiratory chain that catalyzes the reduction of oxygen to water. Electrons originating from reduced cytochrome c in the intermembrane space (IMS) are transferred via the dinuclear copper A center (CU(A)) of subunit 2 and heme A of subunit 1 to the active site in subunit 1, a binuclear center (BNC) formed by heme A3 and copper B (CU(B)). The BNC reduces molecular oxygen to 2 water molecules using 4 electrons from cytochrome c in the IMS and 4 protons from the mitochondrial matrix. The polypeptide is Cytochrome c oxidase subunit 2 (MT-CO2) (Cairina moschata (Muscovy duck)).